A 942-amino-acid polypeptide reads, in one-letter code: Ubiquitin carboxyl-terminal hydrolase 33 (942 aa).

Residues 37 to 140 form a UBP-type zinc finger; it reads NHCPHLDSVG…PSLPHVRQPH (104 aa). Positions 39, 41, 61, 64, 74, 79, 84, 91, 95, 101, 114, and 117 each coordinate Zn(2+). A USP domain is found at 185 to 715; it reads TGLKNIGNTC…EAYVLFYRKS (531 aa). Cys-194 serves as the catalytic Nucleophile. A disordered region spans residues 294–357; the sequence is VEEDPQTITT…MLIQDDENNS (64 aa). The segment covering 315–327 has biased composition (polar residues); the sequence is DVDFQSCESCSNS. Residue Ser-377 is modified to Phosphoserine. A compositionally biased stretch (polar residues) spans 419-431; the sequence is DLSTPQILPSNEG. A disordered region spans residues 419–469; the sequence is DLSTPQILPSNEGVNPRLSASPPKSGNLWPGLAPPHKKAQSASPKRKKQHK. The residue at position 439 (Ser-439) is a Phosphoserine. Positions 453–469 are enriched in basic residues; that stretch reads PHKKAQSASPKRKKQHK. Residue His-673 is the Proton acceptor of the active site. DUSP domains follow at residues 717 to 810 and 818 to 921; these read EEAQ…LYIC and EKIE…RPPV.

The protein belongs to the peptidase C19 family. USP20/USP33 subfamily. Interacts with VHL, leading to its ubiquitination and subsequent degradation. Interacts with ARRB1 and ARRB2. Interacts with ADRB2. Interacts with DIO2. Interacts with ROBO1. Interacts with SELENBP1; in a selenium-dependent manner. Interacts with CCP110. In terms of processing, ubiquitinated via a VHL-dependent pathway for proteasomal degradation. Widely expressed.

It is found in the cytoplasm. It localises to the perinuclear region. The protein localises to the cytoskeleton. The protein resides in the microtubule organizing center. Its subcellular location is the centrosome. It is found in the golgi apparatus. The enzyme catalyses Thiol-dependent hydrolysis of ester, thioester, amide, peptide and isopeptide bonds formed by the C-terminal Gly of ubiquitin (a 76-residue protein attached to proteins as an intracellular targeting signal).. Deubiquitinating enzyme involved in various processes such as centrosome duplication, cellular migration and beta-2 adrenergic receptor/ADRB2 recycling. Involved in regulation of centrosome duplication by mediating deubiquitination of CCP110 in S and G2/M phase, leading to stabilize CCP110 during the period which centrioles duplicate and elongate. Involved in cell migration via its interaction with intracellular domain of ROBO1, leading to regulate the Slit signaling. Plays a role in commissural axon guidance cross the ventral midline of the neural tube in a Slit-dependent manner, possibly by mediating the deubiquitination of ROBO1. Acts as a regulator of G-protein coupled receptor (GPCR) signaling by mediating the deubiquitination of beta-arrestins (ARRB1 and ARRB2) and beta-2 adrenergic receptor (ADRB2). Plays a central role in ADRB2 recycling and resensitization after prolonged agonist stimulation by constitutively binding ADRB2, mediating deubiquitination of ADRB2 and inhibiting lysosomal trafficking of ADRB2. Upon dissociation, it is probably transferred to the translocated beta-arrestins, leading to beta-arrestins deubiquitination and disengagement from ADRB2. This suggests the existence of a dynamic exchange between the ADRB2 and beta-arrestins. Deubiquitinates DIO2, thereby regulating thyroid hormone regulation. Mediates deubiquitination of both 'Lys-48'- and 'Lys-63'-linked polyubiquitin chains. The sequence is that of Ubiquitin carboxyl-terminal hydrolase 33 (USP33) from Homo sapiens (Human).